Consider the following 488-residue polypeptide: Argininosuccinate lyase 2 (488 aa).

Belongs to the lyase 1 family. Argininosuccinate lyase subfamily.

It localises to the cytoplasm. The catalysed reaction is 2-(N(omega)-L-arginino)succinate = fumarate + L-arginine. Its pathway is amino-acid biosynthesis; L-arginine biosynthesis; L-arginine from L-ornithine and carbamoyl phosphate: step 3/3. The sequence is that of Argininosuccinate lyase 2 from Rhizobium meliloti (strain 1021) (Ensifer meliloti).